We begin with the raw amino-acid sequence, 288 residues long: MALFRKKDKYIRITPNNFLKGSVSHNVPEVPDELFAKCPACKHMIYKKDLGLAKICPTCSYNFRISAQERLTLTVDEGSFQELFTSIETKDPLRFPGYQEKLQKAKETTGLHEAVLTGKAMVKGQQIALAIMDSHFIMASMGTVVGEKITRLFELAIEENLPVVIFTASGGARMQEGIMSLMQMAKVSAAVKRHSNAGLFYLTILTDPTTGGVTASFAMEGDIILAEPQSLVGFAGRRVIETTVRENLPDDFQKAEFLQDHGFVDAIVKRTELRDKIAHLVAFHGGGQ.

The CoA carboxyltransferase N-terminal domain maps to 34–288; that stretch reads LFAKCPACKH…HLVAFHGGGQ (255 aa). Residues C38, C41, C56, and C59 each coordinate Zn(2+). The C4-type zinc finger occupies 38–59; the sequence is CPACKHMIYKKDLGLAKICPTC.

This sequence belongs to the AccD/PCCB family. As to quaternary structure, acetyl-CoA carboxylase is a heterohexamer composed of biotin carboxyl carrier protein (AccB), biotin carboxylase (AccC) and two subunits each of ACCase subunit alpha (AccA) and ACCase subunit beta (AccD). Zn(2+) is required as a cofactor.

The protein localises to the cytoplasm. The catalysed reaction is N(6)-carboxybiotinyl-L-lysyl-[protein] + acetyl-CoA = N(6)-biotinyl-L-lysyl-[protein] + malonyl-CoA. The protein operates within lipid metabolism; malonyl-CoA biosynthesis; malonyl-CoA from acetyl-CoA: step 1/1. In terms of biological role, component of the acetyl coenzyme A carboxylase (ACC) complex. Biotin carboxylase (BC) catalyzes the carboxylation of biotin on its carrier protein (BCCP) and then the CO(2) group is transferred by the transcarboxylase to acetyl-CoA to form malonyl-CoA. The chain is Acetyl-coenzyme A carboxylase carboxyl transferase subunit beta from Streptococcus pyogenes serotype M6 (strain ATCC BAA-946 / MGAS10394).